Consider the following 269-residue polypeptide: MTVVSIMWSLVQVQVLVAVALAFLVGGAWCGPPKVPPGKNITAKYGSDWLDAKATWYGKPTGAGPDDNGGGCGYKDVNKAPFNSMGACGNVPIFKDGLGCGSCFEIKCDKPAECSGKPVVVYITDMNYEPIAAYHFDLAGTAFGAMAKKGEEEKLRKAGIIDMQFRRVKCKYGSKVTFHLEKGCNPNYLALLVKYVDGDGDIVAVDIKEKGSDTYEPLKHSWGAIWRKDSDKPIKGPITVQLTTEGGTKTVYDDVIPAGWKPNTAYTAK.

Positions 1 to 30 (MTVVSIMWSLVQVQVLVAVALAFLVGGAWC) are cleaved as a signal peptide. Asn-40 carries an N-linked (GlcNAc...) asparagine glycan. Positions 69-175 (GGGCGYKDVN…RRVKCKYGSK (107 aa)) constitute an Expansin-like EG45 domain. 3 cysteine pairs are disulfide-bonded: Cys-72-Cys-100, Cys-103-Cys-170, and Cys-108-Cys-114. Residues 187–268 (NYLALLVKYV…GWKPNTAYTA (82 aa)) form the Expansin-like CBD domain.

The protein belongs to the expansin family. Expansin B subfamily. Expressed in pollen.

Its subcellular location is the secreted. The protein localises to the cell wall. The protein resides in the membrane. May aid fertilization by loosening the cell wall of the stigma and style, thereby facilitating penetration of the pollen tube. Acts selectively on grass cell walls, which are relatively poor in pectins and xyloglucans and rich in glucuronoarabinoxylans and (1-3),(1-4)-beta-D-glucans, when compared with cell walls of other angiosperms, including other monocots. This Zea mays (Maize) protein is Expansin-B11 (EXPB11).